The primary structure comprises 804 residues: Exo-1,4-beta-xylosidase xlnD (804 aa).

The signal sequence occupies residues 1-26; that stretch reads MAHSMSRPVAATAAALLALALPQALA. N-linked (GlcNAc...) asparagine glycans are attached at residues Asn29, Asn124, Asn148, Asn242, and Asn251. Residue Asp315 is part of the active site. Residues Asn357, Asn390, Asn413, Asn444, Asn455, Asn573, Asn665, Asn696, and Asn718 are each glycosylated (N-linked (GlcNAc...) asparagine).

Belongs to the glycosyl hydrolase 3 family.

It is found in the secreted. It carries out the reaction Hydrolysis of (1-&gt;4)-beta-D-xylans, to remove successive D-xylose residues from the non-reducing termini.. Its pathway is glycan degradation; xylan degradation. Functionally, xylan 1,4-beta-xylosidase involved in the hydrolysis of xylan, a major structural heterogeneous polysaccharide found in plant biomass representing the second most abundant polysaccharide in the biosphere, after cellulose. The protein is Exo-1,4-beta-xylosidase xlnD (xlnD) of Aspergillus awamori (Black koji mold).